Reading from the N-terminus, the 132-residue chain is D-beta-hydroxybutyrate dehydrogenase, mitochondrial (132 aa).

3-27 serves as a coordination point for NAD(+); the sequence is LVTGCDSGFGFSLAKHLHSKGFLVF. The residue at position 17 (K17) is an N6-acetyllysine. Residue S59 participates in substrate binding. Y66 serves as the catalytic Proton acceptor. At K70 the chain carries N6-acetyllysine. S77 carries an O-linked (GlcNAc) serine glycan. S104 carries the post-translational modification Phosphoserine.

Belongs to the short-chain dehydrogenases/reductases (SDR) family. Homotetramer.

It localises to the mitochondrion inner membrane. The protein localises to the mitochondrion matrix. The catalysed reaction is (R)-3-hydroxybutanoate + NAD(+) = acetoacetate + NADH + H(+). Requires phosphatidylcholine as an allosteric activator for enzymatic activity. This is D-beta-hydroxybutyrate dehydrogenase, mitochondrial from Mesocricetus auratus (Golden hamster).